A 318-amino-acid polypeptide reads, in one-letter code: L-lactate dehydrogenase (318 aa).

Residues V20, D41, K46, Y71, and 85 to 86 (GA) each bind NAD(+). Residues Q88, R94, and 126 to 129 (NPVD) contribute to the substrate site. NAD(+) is bound by residues 124-126 (ATN) and S149. Residue 154–157 (DTAR) participates in substrate binding. Beta-D-fructose 1,6-bisphosphate contacts are provided by R159 and H174. Residue H181 is the Proton acceptor of the active site. Y226 is modified (phosphotyrosine). Position 235 (T235) interacts with substrate.

This sequence belongs to the LDH/MDH superfamily. LDH family. Homotetramer.

The protein resides in the cytoplasm. The catalysed reaction is (S)-lactate + NAD(+) = pyruvate + NADH + H(+). The protein operates within fermentation; pyruvate fermentation to lactate; (S)-lactate from pyruvate: step 1/1. Its activity is regulated as follows. Allosterically activated by fructose 1,6-bisphosphate (FBP). Functionally, catalyzes the conversion of lactate to pyruvate. In Priestia megaterium (Bacillus megaterium), this protein is L-lactate dehydrogenase.